We begin with the raw amino-acid sequence, 833 residues long: Leucine--tRNA ligase (833 aa).

Positions 41-52 (PYPSGAGLHVGH) match the 'HIGH' region motif. The 'KMSKS' region signature appears at 610–614 (KMSKS). Lys-613 is a binding site for ATP.

It belongs to the class-I aminoacyl-tRNA synthetase family.

It localises to the cytoplasm. The enzyme catalyses tRNA(Leu) + L-leucine + ATP = L-leucyl-tRNA(Leu) + AMP + diphosphate. This chain is Leucine--tRNA ligase, found in Streptococcus pyogenes serotype M1.